The sequence spans 332 residues: MSRARRVLCRACLALAAVLAVLLLLPLPLPLPLPRAPAPDPDRVPTRSLTLEGDRLQPDDVFIAVKTTRKNHGPRLRLLLRTWISRAPRQTFIFTDGDDPELQMLAGGRMINTNCSAVRTRQALCCKMSVEYDKFLESGRKWFCHVDDDNYVNPKSLLHLLSTFSSNQDIYLGRPSLDHPIEATERVQGGGTSNTVKFWFATGGAGFCLSRGLALKMSPWASLGSFMSTAERVRLPDDCTVGYIVEGLLGARLLHSPLFHSHLENLQRLPSGAILQQVTLSYGGPENPHNVVNVAGSFNIQQDPTRFQSVHCLLYPDTHWCPMKNRVEGAFQ.

Topologically, residues 1-6 are cytoplasmic; that stretch reads MSRARR. Residues 7-29 traverse the membrane as a helical; Signal-anchor for type II membrane protein segment; it reads VLCRACLALAAVLAVLLLLPLPL. Over 30-332 the chain is Lumenal; the sequence is PLPLPRAPAP…MKNRVEGAFQ (303 aa). Arginine 75 contacts substrate. A glycan (N-linked (GlcNAc...) asparagine) is linked at asparagine 114. 2 cysteine pairs are disulfide-bonded: cysteine 115/cysteine 126 and cysteine 144/cysteine 208. Residue aspartate 148 coordinates substrate. Aspartate 149 provides a ligand contact to Mn(2+). The active site involves aspartate 238. Histidine 262 serves as a coordination point for Mn(2+). The cysteines at positions 312 and 321 are disulfide-linked.

The protein belongs to the glycosyltransferase 31 family. The cofactor is Mn(2+). As to expression, detected in all the examined tissues (12.5 dpc). High expression found in adult brain.

Its subcellular location is the golgi apparatus membrane. The catalysed reaction is 3-O-(alpha-L-fucosyl)-L-threonyl-[EGF-like domain protein] + UDP-N-acetyl-alpha-D-glucosamine = 3-O-(N-acetyl-beta-D-glucosaminyl-(1-&gt;3)-alpha-L-fucosyl)-L-threonyl-[EGF-like domain protein] + UDP + H(+). The enzyme catalyses 3-O-(alpha-L-fucosyl)-L-seryl-[EGF-like domain protein] + UDP-N-acetyl-alpha-D-glucosamine = 3-O-(N-acetyl-beta-D-glucosaminyl-(1-&gt;3)-alpha-L-fucosyl)-L-seryl-[EGF-like domain protein] + UDP + H(+). Glycosyltransferase that initiates the elongation of O-linked fucose residues attached to EGF-like repeats in the extracellular domain of Notch molecules. Modulates NOTCH1 activity by modifying O-fucose residues at specific EGF-like domains resulting in enhancement of NOTCH1 activation by DLL1 and JAG1. May be involved in limb formation and in neurogenesis. This is Beta-1,3-N-acetylglucosaminyltransferase radical fringe from Mus musculus (Mouse).